Reading from the N-terminus, the 503-residue chain is MEEFKGYFEFDRTRQQNFLYPLFFRESFYVLAYDHGLNRLNRNRSIFLENADYDKKYGSLIVKRLILRMYEQNHLIIPTKDLNHNPFFGHTNLFYYQMISVLFAVIVEIQFSLKLVSSFEGKLLKKSYNLKSIHSLFPFLEDKLLHFNYVVDVRIPYPIHLEILVQTLRYRVKDASSLHFFRFCLYEYCNYKNFDIQKKSILNPRFFLFLYNSHVCEYESLFLFLRKRSSHLRSTSSEVVFERILFYGKIQHLVKVFVNFPSILGFLKDPLIHYVRYHGKCILATKDTPLLMNKRKYYFVNLWQSYFSVWLQSEKVNINQLSKDTLEFLGYLSSLQLNPLVVRSQMLKNSFLIDNVRIKFDTKIPISSIIGSLSKEKFCNVLGHPVSKSSWTDSSDSEIRERFVRICRNLSHYYSGSSKKKNLYRIKYILRLCCVKTLARKHKSTVRAFLKRLGSGLLEEFLTGEGQIISLIFPRSYYASKRLYRNRIWYLDILFFNDLVNHE.

Belongs to the intron maturase 2 family. MatK subfamily.

Its subcellular location is the plastid. The protein resides in the chloroplast. Its function is as follows. Usually encoded in the trnK tRNA gene intron. Probably assists in splicing its own and other chloroplast group II introns. The chain is Maturase K from Aethionema cordifolium (Lebanon stonecress).